A 353-amino-acid chain; its full sequence is ATPase GET3 (353 aa).

ATP is bound at residue 26-33 (KGGVGKTT). D57 is an active-site residue. 2 residues coordinate ATP: E244 and N271. The Zn(2+) site is built by C284 and C287.

It belongs to the arsA ATPase family. In terms of assembly, homodimer. Component of the Golgi to ER traffic (GET) complex, which is composed of GET1, GET2 and GET3. Within the complex, GET1 and GET2 form a heterotetramer which is stabilized by phosphatidylinositol binding and which binds to the GET3 homodimer. Interacts with the chloride channel protein GEF1.

The protein localises to the cytoplasm. It is found in the endoplasmic reticulum. The protein resides in the golgi apparatus. Functionally, ATPase required for the post-translational delivery of tail-anchored (TA) proteins to the endoplasmic reticulum. Recognizes and selectively binds the transmembrane domain of TA proteins in the cytosol. This complex then targets to the endoplasmic reticulum by membrane-bound receptors GET1 and GET2, where the tail-anchored protein is released for insertion. This process is regulated by ATP binding and hydrolysis. ATP binding drives the homodimer towards the closed dimer state, facilitating recognition of newly synthesized TA membrane proteins. ATP hydrolysis is required for insertion. Subsequently, the homodimer reverts towards the open dimer state, lowering its affinity for the GET1-GET2 receptor, and returning it to the cytosol to initiate a new round of targeting. Cooperates with the HDEL receptor ERD2 to mediate the ATP-dependent retrieval of resident ER proteins that contain a C-terminal H-D-E-L retention signal from the Golgi to the ER. Involved in low-level resistance to the oxyanions arsenite and arsenate, and in heat tolerance. This Zygosaccharomyces rouxii (strain ATCC 2623 / CBS 732 / NBRC 1130 / NCYC 568 / NRRL Y-229) protein is ATPase GET3.